A 105-amino-acid polypeptide reads, in one-letter code: MVKQIESKSAFQEVLDSAGDKLVVVDFSATWCGPCKMIKPFFHALSEKFNNVVFIEVDVDDCKDIAAECEVKCMPTFQFFKKGQKVGEFSGANKEKLEATINELL.

A Thioredoxin domain is found at 2 to 105; it reads VKQIESKSAF…KLEATINELL (104 aa). N6-acetyllysine is present on Lys-3. Lys-8 carries the N6-succinyllysine modification. Active-site nucleophile residues include Cys-32 and Cys-35. Cys-32 and Cys-35 are disulfide-bonded. Residue Lys-39 is modified to N6-acetyllysine. Residues Cys-62 and Cys-69 each carry the S-nitrosocysteine modification. The residue at position 73 (Cys-73) is an S-nitrosocysteine; alternate. Lys-94 carries the post-translational modification N6-acetyllysine; alternate. Lys-94 bears the N6-succinyllysine; alternate mark.

Belongs to the thioredoxin family. Homodimer; disulfide-linked. Interacts with TXNIP through the redox-active site. Interacts with MAP3K5 and CASP3. Interacts with APEX1; the interaction stimulates the FOS/JUN AP-1 DNA-binding activity in a redox-dependent manner. In terms of processing, in the fully reduced protein, both Cys-69 and Cys-73 are nitrosylated in response to nitric oxide (NO). When two disulfide bonds are present in the protein, only Cys-73 is nitrosylated. Cys-73 can serve as donor for nitrosylation of target proteins.

The protein resides in the nucleus. Its subcellular location is the cytoplasm. It localises to the secreted. Its function is as follows. Participates in various redox reactions through the reversible oxidation of its active center dithiol to a disulfide and catalyzes dithiol-disulfide exchange reactions. Plays a role in the reversible S-nitrosylation of cysteine residues in target proteins, and thereby contributes to the response to intracellular nitric oxide. Nitrosylates the active site Cys of CASP3 in response to nitric oxide (NO), and thereby inhibits caspase-3 activity. Induces the FOS/JUN AP-1 DNA binding activity in ionizing radiation (IR) cells through its oxidation/reduction status and stimulates AP-1 transcriptional activity. This chain is Thioredoxin (TXN), found in Oryctolagus cuniculus (Rabbit).